A 241-amino-acid polypeptide reads, in one-letter code: ATP synthase subunit a (241 aa).

7 consecutive transmembrane segments (helical) span residues asparagine 27 to leucine 47, valine 52 to leucine 72, valine 87 to phenylalanine 107, histidine 112 to phenylalanine 132, isoleucine 142 to phenylalanine 162, leucine 175 to lysine 195, and leucine 198 to valine 218.

Belongs to the ATPase A chain family. In terms of assembly, F-type ATPases have 2 components, CF(1) - the catalytic core - and CF(0) - the membrane proton channel. CF(1) has five subunits: alpha(3), beta(3), gamma(1), delta(1), epsilon(1). CF(0) has three main subunits: a(1), b(2) and c(9-12). The alpha and beta chains form an alternating ring which encloses part of the gamma chain. CF(1) is attached to CF(0) by a central stalk formed by the gamma and epsilon chains, while a peripheral stalk is formed by the delta and b chains.

It is found in the cell inner membrane. Its function is as follows. Key component of the proton channel; it plays a direct role in the translocation of protons across the membrane. This is ATP synthase subunit a from Anaplasma marginale (strain St. Maries).